A 305-amino-acid polypeptide reads, in one-letter code: Glycine--tRNA ligase alpha subunit (305 aa).

The protein belongs to the class-II aminoacyl-tRNA synthetase family. As to quaternary structure, tetramer of two alpha and two beta subunits.

It is found in the cytoplasm. It catalyses the reaction tRNA(Gly) + glycine + ATP = glycyl-tRNA(Gly) + AMP + diphosphate. This Streptococcus pneumoniae (strain CGSP14) protein is Glycine--tRNA ligase alpha subunit.